Consider the following 355-residue polypeptide: Phospho-N-acetylmuramoyl-pentapeptide-transferase (355 aa).

10 helical membrane passes run 14–34 (PTGT…VVFF), 40–60 (LLIP…QVVP), 84–104 (GTPT…ALIW), 107–127 (FTPN…IGWL), 147–167 (LILQ…NQVS), 176–196 (LVIP…VAES), 205–225 (VDGL…IIIA), 227–247 (SHPD…GFIF), 268–290 (ALAA…GLFF), and 334–354 (TKIV…AIWS).

Belongs to the glycosyltransferase 4 family. MraY subfamily. It depends on Mg(2+) as a cofactor.

Its subcellular location is the cell inner membrane. It carries out the reaction UDP-N-acetyl-alpha-D-muramoyl-L-alanyl-gamma-D-glutamyl-meso-2,6-diaminopimeloyl-D-alanyl-D-alanine + di-trans,octa-cis-undecaprenyl phosphate = di-trans,octa-cis-undecaprenyl diphospho-N-acetyl-alpha-D-muramoyl-L-alanyl-D-glutamyl-meso-2,6-diaminopimeloyl-D-alanyl-D-alanine + UMP. The protein operates within cell wall biogenesis; peptidoglycan biosynthesis. Its function is as follows. Catalyzes the initial step of the lipid cycle reactions in the biosynthesis of the cell wall peptidoglycan: transfers peptidoglycan precursor phospho-MurNAc-pentapeptide from UDP-MurNAc-pentapeptide onto the lipid carrier undecaprenyl phosphate, yielding undecaprenyl-pyrophosphoryl-MurNAc-pentapeptide, known as lipid I. The chain is Phospho-N-acetylmuramoyl-pentapeptide-transferase from Microcystis aeruginosa (strain NIES-843 / IAM M-2473).